The primary structure comprises 192 residues: Molybdenum cofactor guanylyltransferase (192 aa).

Residues 10-12, Lys-23, Asn-51, Asp-69, and Asp-99 each bind GTP; that span reads LAG. Asp-99 contributes to the Mg(2+) binding site.

It belongs to the MobA family. Monomer. Mg(2+) is required as a cofactor.

It is found in the cytoplasm. It carries out the reaction Mo-molybdopterin + GTP + H(+) = Mo-molybdopterin guanine dinucleotide + diphosphate. Functionally, transfers a GMP moiety from GTP to Mo-molybdopterin (Mo-MPT) cofactor (Moco or molybdenum cofactor) to form Mo-molybdopterin guanine dinucleotide (Mo-MGD) cofactor. This Haemophilus influenzae (strain ATCC 51907 / DSM 11121 / KW20 / Rd) protein is Molybdenum cofactor guanylyltransferase.